The sequence spans 186 residues: Large ribosomal subunit protein uL22 (186 aa).

Residues 160-186 (AAENEPAKKKLSKKKLQRQKEKMMRNE) form a disordered region. The span at 177–186 (RQKEKMMRNE) shows a compositional bias: basic and acidic residues.

The protein belongs to the universal ribosomal protein uL22 family.

The protein is Large ribosomal subunit protein uL22 (RpL17) of Aedes aegypti (Yellowfever mosquito).